Consider the following 354-residue polypeptide: Trans-3-hydroxy-L-proline dehydratase (354 aa).

Catalysis depends on Cys-104, which acts as the Proton acceptor. Substrate contacts are provided by residues 105–106 (GH), Asp-269, and 274–275 (GS).

The protein belongs to the proline racemase family. As to quaternary structure, homodimer. As to expression, ubiquitously expressed.

The catalysed reaction is trans-3-hydroxy-L-proline = 1-pyrroline-2-carboxylate + H2O. Catalyzes the dehydration of trans-3-hydroxy-L-proline to Delta(1)-pyrroline-2-carboxylate (Pyr2C). May be required to degrade trans-3-hydroxy-L-proline from the diet and originating from the degradation of proteins such as collagen-IV that contain it. This is Trans-3-hydroxy-L-proline dehydratase (L3HYPDH) from Homo sapiens (Human).